Reading from the N-terminus, the 286-residue chain is Phycobilisome 32.1 kDa linker polypeptide, phycocyanin-associated, rod (286 aa).

The 179-residue stretch at A2 to R180 folds into the PBS-linker domain. The region spanning D234–A286 is the CpcD-like domain.

This sequence belongs to the phycobilisome linker protein family.

It is found in the cellular thylakoid membrane. In terms of biological role, rod linker protein, associated with phycocyanin. Linker polypeptides determine the state of aggregation and the location of the disk-shaped phycobiliprotein units within the phycobilisome and modulate their spectroscopic properties in order to mediate a directed and optimal energy transfer. This chain is Phycobilisome 32.1 kDa linker polypeptide, phycocyanin-associated, rod (cpcC), found in Mastigocladus laminosus (Fischerella sp.).